We begin with the raw amino-acid sequence, 395 residues long: MEGIINIGTFIEQLTHYIKIGIFINKGVSSDKNHILDKCINLHNKLKSIEGSKEISPEEETYVRRSIKRFNLVLKVNPDQSPIDIKDKENQRKMITFQEHSSITDNDINSMITYSSNYNINIFSDVPLTFILRDGKYQQLLWQYTRSLFYISQVIISKVESKADMNNPVNVYKKNIVDSSMKKLEDILSTIAEIEDSIELEKILSLDQFLKSKLSNIKITNNQIDEAKAEFKEMFNKKGITGNDAISRMIDSITGKLDTINSGQGNILQNIVGIAQSVASEMRGEIENNPESIKSTLAAVTDIFKEATVNSNENENIPPELKNIFGAVMSSPLLSKIQGQESTENISDDVLGKELEILSQTYGLDKDEIMKAMKNETGEMDPTKFEQFMQKFQSN.

Residues 182 to 238 (KKLEDILSTIAEIEDSIELEKILSLDQFLKSKLSNIKITNNQIDEAKAEFKEMFNKK) adopt a coiled-coil conformation.

This is an uncharacterized protein from Acanthamoeba polyphaga (Amoeba).